We begin with the raw amino-acid sequence, 341 residues long: MVTDLGGGYAEAEGGPVRHIPVLLEPVIEALEPSAGKVILDGTFGAGGYTSAILDTGADVIALDRDPNAIAGGQAMVAARAGRLTLHHTRFSTLDNFAPEGGLDGIVLDIGVSSMQIDEAERGFSFQRNGPLDMRMSGTGVSAADVVNRAKVGDLIRIFGFLGEEKQSGRIARAIEKRRVNHPFQTTRDLAGMIEIVTPRKAKDKIHPATRVFQALRVFVNDELGELAEALFAAERALKPGGRLVVVTFHSLEDRIVKKFFSDRSGKAAGSRHMPMAFERPATFEPVGKGMVTATEEEAEINPRARSAKLRAGIRTAHPAMKADFSIFDLPDLAEIERLGA.

S-adenosyl-L-methionine-binding positions include 47 to 49 (GGY), D64, F97, D109, and Q116.

Belongs to the methyltransferase superfamily. RsmH family.

It is found in the cytoplasm. It catalyses the reaction cytidine(1402) in 16S rRNA + S-adenosyl-L-methionine = N(4)-methylcytidine(1402) in 16S rRNA + S-adenosyl-L-homocysteine + H(+). Its function is as follows. Specifically methylates the N4 position of cytidine in position 1402 (C1402) of 16S rRNA. In Allorhizobium ampelinum (strain ATCC BAA-846 / DSM 112012 / S4) (Agrobacterium vitis (strain S4)), this protein is Ribosomal RNA small subunit methyltransferase H.